An 89-amino-acid chain; its full sequence is Small ribosomal subunit protein uS17 (89 aa).

This sequence belongs to the universal ribosomal protein uS17 family. In terms of assembly, part of the 30S ribosomal subunit.

Its function is as follows. One of the primary rRNA binding proteins, it binds specifically to the 5'-end of 16S ribosomal RNA. In Phytoplasma mali (strain AT), this protein is Small ribosomal subunit protein uS17.